A 373-amino-acid polypeptide reads, in one-letter code: Transcription factor SPATULA (373 aa).

The segment covering 1–21 has biased composition (basic and acidic residues); that stretch reads MISQREEREEKKQRVMGDKKL. Disordered regions lie at residues 1–46 and 141–210; these read MISQ…PSSS and VQGN…KRRR. Positions 141 to 160 are enriched in low complexity; that stretch reads VQGNSSGTRVSSSSVGASGN. Residues 161–177 show a composition bias toward acidic residues; it reads ETDEYDCESEEGGEAVV. Residues 182–191 show a composition bias toward low complexity; it reads SSKSGPSSRS. Over residues 197–210 the composition is skewed to basic and acidic residues; the sequence is RAAEVHNLSEKRRR. The region spanning 197 to 246 is the bHLH domain; the sequence is RAAEVHNLSEKRRRSRINEKMKALQSLIPNSNKTDKASMLDEAIEYLKQL.

In terms of assembly, homodimer. Interacts with HEC1, HEC2 and HEC3. Binds to RGL2 and RGA. In terms of tissue distribution, expressed in lateral root caps, young leaves, stipules, maturing pith cells of the stem, differentiating vascular cells, shoot apical meristems and flowers.

It localises to the nucleus. Functionally, transcription factor that plays a role in floral organogenesis. Promotes the growth of carpel margins and of pollen tract tissues derived from them. This is Transcription factor SPATULA (SPT) from Arabidopsis thaliana (Mouse-ear cress).